The chain runs to 501 residues: Lysine--tRNA ligase (501 aa).

Mg(2+) is bound by residues Glu404 and Glu411.

Belongs to the class-II aminoacyl-tRNA synthetase family. As to quaternary structure, homodimer. Mg(2+) serves as cofactor.

Its subcellular location is the cytoplasm. It catalyses the reaction tRNA(Lys) + L-lysine + ATP = L-lysyl-tRNA(Lys) + AMP + diphosphate. The chain is Lysine--tRNA ligase from Campylobacter jejuni subsp. doylei (strain ATCC BAA-1458 / RM4099 / 269.97).